We begin with the raw amino-acid sequence, 126 residues long: Small ribosomal subunit protein bS6 (126 aa).

This sequence belongs to the bacterial ribosomal protein bS6 family.

Binds together with bS18 to 16S ribosomal RNA. The sequence is that of Small ribosomal subunit protein bS6 from Bordetella bronchiseptica (strain ATCC BAA-588 / NCTC 13252 / RB50) (Alcaligenes bronchisepticus).